The primary structure comprises 556 residues: 2-succinyl-5-enolpyruvyl-6-hydroxy-3-cyclohexene-1-carboxylate synthase (556 aa).

This sequence belongs to the TPP enzyme family. MenD subfamily. As to quaternary structure, homodimer. Mg(2+) is required as a cofactor. The cofactor is Mn(2+). Thiamine diphosphate serves as cofactor.

The enzyme catalyses isochorismate + 2-oxoglutarate + H(+) = 5-enolpyruvoyl-6-hydroxy-2-succinyl-cyclohex-3-ene-1-carboxylate + CO2. It functions in the pathway quinol/quinone metabolism; 1,4-dihydroxy-2-naphthoate biosynthesis; 1,4-dihydroxy-2-naphthoate from chorismate: step 2/7. Its pathway is quinol/quinone metabolism; menaquinone biosynthesis. Its function is as follows. Catalyzes the thiamine diphosphate-dependent decarboxylation of 2-oxoglutarate and the subsequent addition of the resulting succinic semialdehyde-thiamine pyrophosphate anion to isochorismate to yield 2-succinyl-5-enolpyruvyl-6-hydroxy-3-cyclohexene-1-carboxylate (SEPHCHC). This is 2-succinyl-5-enolpyruvyl-6-hydroxy-3-cyclohexene-1-carboxylate synthase from Shigella flexneri serotype 5b (strain 8401).